A 590-amino-acid polypeptide reads, in one-letter code: Cell division protein FtsZ 1 (590 aa).

GTP contacts are provided by residues 24–28 (GGGGN), 111–113 (GTG), glutamate 142, arginine 146, and aspartate 190. Disordered stretches follow at residues 346 to 372 (AAVP…QPLQ) and 524 to 590 (EATN…RQSS). The segment covering 534-546 (AAAPSAASQQRRP) has biased composition (low complexity). Positions 559-576 (GQLDDHGRAAPQMRSHED) are enriched in basic and acidic residues.

The protein belongs to the FtsZ family. In terms of assembly, homodimer. Polymerizes to form a dynamic ring structure in a strictly GTP-dependent manner. Interacts directly with several other division proteins.

It localises to the cytoplasm. In terms of biological role, essential cell division protein that forms a contractile ring structure (Z ring) at the future cell division site. The regulation of the ring assembly controls the timing and the location of cell division. One of the functions of the FtsZ ring is to recruit other cell division proteins to the septum to produce a new cell wall between the dividing cells. Binds GTP and shows GTPase activity. This is Cell division protein FtsZ 1 from Rhizobium meliloti (strain 1021) (Ensifer meliloti).